A 123-amino-acid chain; its full sequence is UPF0738 protein BCE_1319 (123 aa).

Belongs to the UPF0738 family.

The chain is UPF0738 protein BCE_1319 from Bacillus cereus (strain ATCC 10987 / NRS 248).